Reading from the N-terminus, the 328-residue chain is Phosphate acyltransferase (328 aa).

Belongs to the PlsX family. Homodimer. Probably interacts with PlsY.

The protein localises to the cytoplasm. It carries out the reaction a fatty acyl-[ACP] + phosphate = an acyl phosphate + holo-[ACP]. Its pathway is lipid metabolism; phospholipid metabolism. In terms of biological role, catalyzes the reversible formation of acyl-phosphate (acyl-PO(4)) from acyl-[acyl-carrier-protein] (acyl-ACP). This enzyme utilizes acyl-ACP as fatty acyl donor, but not acyl-CoA. The polypeptide is Phosphate acyltransferase (Campylobacter jejuni subsp. jejuni serotype O:23/36 (strain 81-176)).